A 218-amino-acid chain; its full sequence is Large ribosomal subunit protein eL13 (218 aa).

Residues 196–218 (AKRAKEAAESEDAAKGDPKKAKK) form a disordered region. The segment covering 199-218 (AKEAAESEDAAKGDPKKAKK) has biased composition (basic and acidic residues).

The protein belongs to the eukaryotic ribosomal protein eL13 family. As to quaternary structure, component of the 60S large ribosomal subunit (LSU).

It is found in the cytoplasm. In terms of biological role, component of the ribosome, a large ribonucleoprotein complex responsible for the synthesis of proteins in the cell. The small ribosomal subunit (SSU) binds messenger RNAs (mRNAs) and translates the encoded message by selecting cognate aminoacyl-transfer RNA (tRNA) molecules. The large subunit (LSU) contains the ribosomal catalytic site termed the peptidyl transferase center (PTC), which catalyzes the formation of peptide bonds, thereby polymerizing the amino acids delivered by tRNAs into a polypeptide chain. The nascent polypeptides leave the ribosome through a tunnel in the LSU and interact with protein factors that function in enzymatic processing, targeting, and the membrane insertion of nascent chains at the exit of the ribosomal tunnel. As part of the LSU, it is probably required for its formation and the maturation of rRNAs. The protein is Large ribosomal subunit protein eL13 (RpL13) of Drosophila melanogaster (Fruit fly).